The chain runs to 309 residues: Aspartate carbamoyltransferase catalytic subunit (309 aa).

Residues Arg57 and Thr58 each contribute to the carbamoyl phosphate site. Residue Lys86 participates in L-aspartate binding. Arg107, His135, and Gln138 together coordinate carbamoyl phosphate. Residues Arg168 and Arg228 each contribute to the L-aspartate site. Carbamoyl phosphate is bound by residues Leu267 and Pro268.

It belongs to the aspartate/ornithine carbamoyltransferase superfamily. ATCase family. Heterooligomer of catalytic and regulatory chains.

It catalyses the reaction carbamoyl phosphate + L-aspartate = N-carbamoyl-L-aspartate + phosphate + H(+). It functions in the pathway pyrimidine metabolism; UMP biosynthesis via de novo pathway; (S)-dihydroorotate from bicarbonate: step 2/3. Functionally, catalyzes the condensation of carbamoyl phosphate and aspartate to form carbamoyl aspartate and inorganic phosphate, the committed step in the de novo pyrimidine nucleotide biosynthesis pathway. This chain is Aspartate carbamoyltransferase catalytic subunit, found in Nitrosopumilus maritimus (strain SCM1).